An 87-amino-acid polypeptide reads, in one-letter code: Glutaredoxin (87 aa).

The region spanning 1 to 87 is the Glutaredoxin domain; sequence MFVVIFGRPG…YAKENLGLFD (87 aa). Cys-11 and Cys-14 are joined by a disulfide.

Belongs to the glutaredoxin family. Monomer.

The protein resides in the cytoplasm. In terms of biological role, has a glutathione-disulfide oxidoreductase activity in the presence of NADPH and glutathione reductase. Reduces low molecular weight disulfides and proteins. This chain is Glutaredoxin (grx), found in Vibrio cholerae serotype O1 (strain ATCC 39315 / El Tor Inaba N16961).